The chain runs to 339 residues: Ferredoxin--NADP reductase (339 aa).

Positions 32, 40, 45, 85, 120, 287, and 327 each coordinate FAD.

The protein belongs to the ferredoxin--NADP reductase type 2 family. In terms of assembly, homodimer. It depends on FAD as a cofactor.

It catalyses the reaction 2 reduced [2Fe-2S]-[ferredoxin] + NADP(+) + H(+) = 2 oxidized [2Fe-2S]-[ferredoxin] + NADPH. This is Ferredoxin--NADP reductase from Wolbachia sp. subsp. Brugia malayi (strain TRS).